An 84-amino-acid polypeptide reads, in one-letter code: Beta-defensin 119 (84 aa).

An N-terminal signal peptide occupies residues 1 to 21 (MKLLYLFLAILLAIEEPVISG). Cystine bridges form between cysteine 35/cysteine 49 and cysteine 39/cysteine 56.

Belongs to the beta-defensin family.

The protein localises to the secreted. Its function is as follows. Has antibacterial activity. This is Beta-defensin 119 (DEFB119) from Pan troglodytes (Chimpanzee).